The chain runs to 372 residues: DNA replication and repair protein RecF (372 aa).

30–37 is a binding site for ATP; sequence GDNGQGKT.

It belongs to the RecF family.

The protein localises to the cytoplasm. Functionally, the RecF protein is involved in DNA metabolism; it is required for DNA replication and normal SOS inducibility. RecF binds preferentially to single-stranded, linear DNA. It also seems to bind ATP. This chain is DNA replication and repair protein RecF, found in Ruminiclostridium cellulolyticum (strain ATCC 35319 / DSM 5812 / JCM 6584 / H10) (Clostridium cellulolyticum).